The primary structure comprises 100 residues: C-X-C motif chemokine 2 (100 aa).

The N-terminal stretch at 1–27 (MAPPTCRLLSAALVLLLLLATNHQATG) is a signal peptide. Intrachain disulfides connect C36–C62 and C38–C78.

It belongs to the intercrine alpha (chemokine CxC) family. Homotetramer.

It is found in the secreted. Functionally, chemotactic for human polymorphonuclear leukocytes but does not induce chemokinesis or an oxidative burst. The sequence is that of C-X-C motif chemokine 2 (Cxcl2) from Mus musculus (Mouse).